The primary structure comprises 215 residues: Leucyl/phenylalanyl-tRNA--protein transferase (215 aa).

Belongs to the L/F-transferase family.

The protein localises to the cytoplasm. The catalysed reaction is N-terminal L-lysyl-[protein] + L-leucyl-tRNA(Leu) = N-terminal L-leucyl-L-lysyl-[protein] + tRNA(Leu) + H(+). It catalyses the reaction N-terminal L-arginyl-[protein] + L-leucyl-tRNA(Leu) = N-terminal L-leucyl-L-arginyl-[protein] + tRNA(Leu) + H(+). It carries out the reaction L-phenylalanyl-tRNA(Phe) + an N-terminal L-alpha-aminoacyl-[protein] = an N-terminal L-phenylalanyl-L-alpha-aminoacyl-[protein] + tRNA(Phe). In terms of biological role, functions in the N-end rule pathway of protein degradation where it conjugates Leu, Phe and, less efficiently, Met from aminoacyl-tRNAs to the N-termini of proteins containing an N-terminal arginine or lysine. In Campylobacter jejuni subsp. jejuni serotype O:2 (strain ATCC 700819 / NCTC 11168), this protein is Leucyl/phenylalanyl-tRNA--protein transferase.